Reading from the N-terminus, the 122-residue chain is Aspartate 1-decarboxylase (122 aa).

The active-site Schiff-base intermediate with substrate; via pyruvic acid is the Ser-25. A Pyruvic acid (Ser) modification is found at Ser-25. Thr-57 contributes to the substrate binding site. Tyr-58 (proton donor) is an active-site residue. 73–75 (GAA) provides a ligand contact to substrate.

This sequence belongs to the PanD family. Heterooctamer of four alpha and four beta subunits. The cofactor is pyruvate. Is synthesized initially as an inactive proenzyme, which is activated by self-cleavage at a specific serine bond to produce a beta-subunit with a hydroxyl group at its C-terminus and an alpha-subunit with a pyruvoyl group at its N-terminus.

The protein localises to the cytoplasm. It catalyses the reaction L-aspartate + H(+) = beta-alanine + CO2. Its pathway is cofactor biosynthesis; (R)-pantothenate biosynthesis; beta-alanine from L-aspartate: step 1/1. In terms of biological role, catalyzes the pyruvoyl-dependent decarboxylation of aspartate to produce beta-alanine. This is Aspartate 1-decarboxylase from Bordetella pertussis (strain Tohama I / ATCC BAA-589 / NCTC 13251).